Reading from the N-terminus, the 240-residue chain is UDP-2,3-diacylglucosamine hydrolase (240 aa).

Positions 8, 10, 41, 79, and 114 each coordinate Mn(2+). Substrate is bound at residue 79–80 (NR). Residues aspartate 122, serine 160, asparagine 164, lysine 167, and histidine 195 each contribute to the substrate site. 2 residues coordinate Mn(2+): histidine 195 and histidine 197.

This sequence belongs to the LpxH family. It depends on Mn(2+) as a cofactor.

It is found in the cell inner membrane. It carries out the reaction UDP-2-N,3-O-bis[(3R)-3-hydroxytetradecanoyl]-alpha-D-glucosamine + H2O = 2-N,3-O-bis[(3R)-3-hydroxytetradecanoyl]-alpha-D-glucosaminyl 1-phosphate + UMP + 2 H(+). It functions in the pathway glycolipid biosynthesis; lipid IV(A) biosynthesis; lipid IV(A) from (3R)-3-hydroxytetradecanoyl-[acyl-carrier-protein] and UDP-N-acetyl-alpha-D-glucosamine: step 4/6. Its function is as follows. Hydrolyzes the pyrophosphate bond of UDP-2,3-diacylglucosamine to yield 2,3-diacylglucosamine 1-phosphate (lipid X) and UMP by catalyzing the attack of water at the alpha-P atom. Involved in the biosynthesis of lipid A, a phosphorylated glycolipid that anchors the lipopolysaccharide to the outer membrane of the cell. The sequence is that of UDP-2,3-diacylglucosamine hydrolase from Escherichia coli O6:K15:H31 (strain 536 / UPEC).